A 75-amino-acid polypeptide reads, in one-letter code: Large ribosomal subunit protein bL31 (75 aa).

Zn(2+) contacts are provided by cysteine 16, cysteine 18, cysteine 37, and cysteine 40.

It belongs to the bacterial ribosomal protein bL31 family. Type A subfamily. As to quaternary structure, part of the 50S ribosomal subunit. Zn(2+) serves as cofactor.

In terms of biological role, binds the 23S rRNA. In Baumannia cicadellinicola subsp. Homalodisca coagulata, this protein is Large ribosomal subunit protein bL31.